Consider the following 496-residue polypeptide: MNKEILAVVEAVSNEKSLPREKIFEALEMALATATKKKHEQEIDIRVSINRKTGGFTTFRRWMVVETVTQPTREITLEAACFDGEKVYLNDYIEEQIESVDFDRITTQTAKQVIVQKVREAERAMLVEQFRKYTGQIITGIVKKINRDNIMLDLGNNAEALILREGMLPRENFRPGDRIRGILYGVYPEARGAQLFISRSKTEMLTELFRIEVPEIGEEVIEIKAAARDPGSRAKIAVKTNDKRIDPVGACVGMRGARVQAVSSELCGERIDIILWDDNPAQFVINAMAPADVASIVVDEDCHTMDIAVDINNLAQAIGRNGQNVRLASQISGWELNVMTTEDLHSKHKEEAHTAFNFFKKNLNINENIIKILVKEGFSSLEELAYIPFNELLEVKNLTEDQAKKVREGAKSKLLLMESDKNKMIIQERKTEKELLKINGMNAVLALQLAEKNIFTIEELADQGIDDLTDIKNLNSEQAGLLIMTARNICWFSSKV.

Residues 135–200 (GQIITGIVKK…RGAQLFISRS (66 aa)) form the S1 motif domain. Positions 302–370 (CHTMDIAVDI…KNLNINENII (69 aa)) constitute a KH domain. Repeat copies occupy residues 364–414 (NINE…KSKL) and 440–490 (GMNA…RNIC). The tract at residues 364-490 (NINENIIKIL…LLIMTARNIC (127 aa)) is 2 X 51 AA approximate repeats.

Belongs to the NusA family. Monomer. Binds directly to the core enzyme of the DNA-dependent RNA polymerase and to nascent RNA.

The protein localises to the cytoplasm. Functionally, participates in both transcription termination and antitermination. This Buchnera aphidicola subsp. Acyrthosiphon pisum (strain APS) (Acyrthosiphon pisum symbiotic bacterium) protein is Transcription termination/antitermination protein NusA.